A 376-amino-acid polypeptide reads, in one-letter code: Cinnamyl alcohol dehydrogenase 2 (376 aa).

Position 44 (cysteine 44) interacts with Zn(2+). An NADP(+)-binding site is contributed by serine 46. Residues histidine 66, glutamate 67, cysteine 97, cysteine 100, cysteine 103, cysteine 111, and cysteine 161 each coordinate Zn(2+). Residues threonine 165, 187 to 192 (GLGGLG), 210 to 215 (SRSSEK), threonine 250, glycine 274, and 297 to 299 (SQI) each bind NADP(+).

Belongs to the zinc-containing alcohol dehydrogenase family. Homodimer. Requires Zn(2+) as cofactor. In terms of tissue distribution, expressed at the base of the stems.

The enzyme catalyses (E)-cinnamyl alcohol + NADP(+) = (E)-cinnamaldehyde + NADPH + H(+). The catalysed reaction is (E)-coniferol + NADP(+) = (E)-coniferaldehyde + NADPH + H(+). It catalyses the reaction (E)-sinapyl alcohol + NADP(+) = (E)-sinapaldehyde + NADPH + H(+). It carries out the reaction (E)-4-coumaroyl alcohol + NADP(+) = (E)-4-coumaraldehyde + NADPH + H(+). The enzyme catalyses (E)-caffeyl alcohol + NADP(+) = (E)-caffeyl aldehyde + NADPH + H(+). It functions in the pathway aromatic compound metabolism; phenylpropanoid biosynthesis. Functionally, involved in lignin biosynthesis. Catalyzes the final step specific for the production of lignin monomers. Catalyzes the NADPH-dependent reduction of coniferaldehyde, 5-hydroxyconiferaldehyde, sinapaldehyde, 4-coumaraldehyde and caffeyl aldehyde to their respective alcohols. The chain is Cinnamyl alcohol dehydrogenase 2 from Arabidopsis thaliana (Mouse-ear cress).